Here is a 4776-residue protein sequence, read N- to C-terminus: Pneumococcal serine-rich repeat protein (4776 aa).

The signal sequence occupies residues 1–72; the sequence is MTETVEDKVS…VVLGTISTSN (72 aa). O-linked (GlcNAc...) serine glycosylation is found at S73, S75, S76, S78, S80, S82, S94, S100, S108, S110, S118, S120, and S121. The serine-rich repeat region 1, SRR1 stretch occupies residues 73 to 121; it reads SASSTSLSASESASTSASESASTSASTSASTSASESASTSASTSISASS. The interval 86-112 is disordered; sequence STSASESASTSASTSASTSASESASTS. Positions 122–166 are self aggregating domain; the sequence is TVVGSQTAAATEATAKKVEEDRKKPASDYVASVTNVNLQSYAKRR. A basic region, BR region spans residues 122–394; that stretch reads TVVGSQTAAA…QSKSLSVSAS (273 aa). Positions 164–168 match the Host furin cleavage recognition motif; the sequence is KRRKR. The interval 273-341 is keratin 10-binding domain, cell-type specific binding to lung-derived cells; the sequence is TQTMLTLGSD…GYGLTSSWTV (69 aa). The tract at residues 395-4712 is serine-rich repeat region 2, SRR2; that stretch reads QSASASASTS…ASTSASASAS (4318 aa). 27 disordered regions span residues 481–627, 861–889, 925–965, 1052–1085, 1123–1153, 1171–1199, 1311–1357, 1671–1731, 1792–1863, 2105–2133, 2169–2209, 2296–2329, 2367–2397, 2415–2443, 2571–2631, 2737–2805, 2855–3113, 3347–3375, 3411–3451, 3538–3571, 3609–3639, 3657–3685, 3797–3843, 4167–4197, 4215–4243, 4355–4401, and 4706–4747; these read ASTS…STSA, ASASTSASESASTSASASASTSASESAST, ASAS…SASA, SASTSASESASTSASASASTSASESASTSASASA, ASASTSASESASTSTSASASTSASESASTSA, ASASTSASASASTSASASTSASESASTSA, ASES…SAST, ASES…SESA, SASE…STSA, ESAS…STSA, ASAS…STSA, and SASA…GTES. Residues 4715-4747 show a composition bias toward polar residues; it reads VSNSANHSNSQVGNTSGSTGKSQKELPNTGTES. An LPXTG sorting signal motif is present at residues 4740–4744; that stretch reads LPNTG. The residue at position 4743 (T4743) is a Pentaglycyl murein peptidoglycan amidated threonine. Positions 4744-4776 are cleaved as a propeptide — removed by sortase; it reads GTESSIGSVLLGVLAAVTGIGLVAKRRKRDEEE.

This sequence belongs to the serine-rich repeat protein (SRRP) family. As to quaternary structure, binds to human and mouse protein keratin 10 (KRT10). Glycosylated. Only truncated substrates greater than 25 residues long are glycosylated by the Gtf1-Gtf2 complex in vitro; only Ser residues have been seen to be glycosylated. Based on electrophoretic mobility it is probable that most of the Ser residues in SSR1 and SSR2 are O-GlcNAcylated. Subsequent glycosylation by up to 7 sugar transferases (Gtf3 and GlyAT, GlyB, GlyD, GlyE, GlyF and GlyG) is able to generate very high sugar polymorphism. In terms of processing, can be cleaved by human furin protease; this fragment contributes to self-aggregation and possibly biofilm formation in vitro.

Its subcellular location is the secreted. The protein resides in the cell wall. It localises to the cell surface. Its function is as follows. Protein that allows bacteria to adhere to mammalian host cells. Required for full virulence in mouse infection models when infected intranasally. Required for adhesion to host cells in vitro and for persistence in the lower respiratory tract. Binds host keratin 10 (KRT10) on lung cells which mediates adhesion via the C-terminus of the basic region (BR, residues 273-341); glycosylation of either protein is not required for the interaction. A region in the N-terminus (residues 122-166) self aggregates, contributing to mature biofilm formation. The basic region (BR, residues 187-385) also self aggregates; the BR binds DNA which enhances self aggregation. This Streptococcus pneumoniae serotype 4 (strain ATCC BAA-334 / TIGR4) protein is Pneumococcal serine-rich repeat protein.